The following is a 343-amino-acid chain: 3-hydroxy-3-methylglutaryl-CoA lyase, cytoplasmic (343 aa).

The N-myristoyl glycine moiety is linked to residue G2. Residues 48 to 315 (VKIVEVGPRD…NTGVDLHKVM (268 aa)) enclose the Pyruvate carboxyltransferase domain. R56 is a substrate binding site. D57, H248, and H250 together coordinate a divalent metal cation. C281 is an active-site residue. Residue N290 coordinates a divalent metal cation.

This sequence belongs to the HMG-CoA lyase family. A divalent metal cation serves as cofactor. Present at high level in duodenum and small intestine (at protein level).

The protein localises to the cytoplasm. The protein resides in the cytosol. It localises to the endoplasmic reticulum membrane. It catalyses the reaction (3S)-3-hydroxy-3-methylglutaryl-CoA = acetoacetate + acetyl-CoA. The protein operates within metabolic intermediate metabolism; (S)-3-hydroxy-3-methylglutaryl-CoA degradation; acetoacetate from (S)-3-hydroxy-3-methylglutaryl-CoA: step 1/1. Functionally, non-mitochondrial 3-hydroxy-3-methylglutaryl-CoA lyase that catalyzes a cation-dependent cleavage of (S)-3-hydroxy-3-methylglutaryl-CoA into acetyl-CoA and acetoacetate, a key step in ketogenesis, the products of which support energy production in nonhepatic animal tissues. The protein is 3-hydroxy-3-methylglutaryl-CoA lyase, cytoplasmic (Hmgcll1) of Rattus norvegicus (Rat).